We begin with the raw amino-acid sequence, 1390 residues long: Bromodomain adjacent to zinc finger domain protein 2 (1390 aa).

Disordered stretches follow at residues 30–67, 178–215, and 235–269; these read AKIQKATASSPSKSTNGTSASTSAVPSTSGTSSSQNEA, AKKKPAGVASTSSASTSSSTPSTSSASITSSNNNAANN, and QKQQQQQKDTQKKADQAKKAKELAKQQQKEQDVKN. Over residues 35-45 the composition is skewed to polar residues; the sequence is ATASSPSKSTN. Low complexity-rich tracts occupy residues 46–63 and 186–215; these read GTSASTSAVPSTSGTSSS and ASTSSASTSSSTPSTSSASITSSNNNAANN. A compositionally biased stretch (basic and acidic residues) spans 243–269; it reads DTQKKADQAKKAKELAKQQQKEQDVKN. One can recognise an MBD domain in the interval 323–395; the sequence is KTNEAMLRLP…DNFLFNTKLV (73 aa). Residues 524-588 form the DDT domain; the sequence is SQGFADALMV…LRLALEFPGM (65 aa). Over residues 705 to 724 the composition is skewed to basic and acidic residues; sequence KEEQNHESDSEPPTRPDTPK. The disordered stretch occupies residues 705–729; sequence KEEQNHESDSEPPTRPDTPKKATVA. The PHD-type zinc-finger motif lies at 1100–1149; it reads EALCQICKSMDGDEMLVCDGCESGCHMECFRPRMTKVPEGDWFCQRCREE. Residues 1218 to 1241 form a disordered region; sequence EERELEDDNHAENGENTKNGHMNG. The Bromo domain maps to 1273–1377; sequence LPKNMNKELC…KFFQKRWKQL (105 aa).

This sequence belongs to the WAL family. Interacts with set-6. As to expression, broadly expressed in the nervous system, including head, body and tail neurons.

It is found in the nucleus. Its subcellular location is the chromosome. In terms of biological role, chromatin reader protein, involved in positively modulating the rate of age-related behavioral deterioration. Positively modulates the level of global trimethylated 'Lys-9' of histone H3 (H3K9me3), but not of H3K9me2 or H3K9me1. May repress the expression of mitochondrial function-related genes by occupying their promoter regions, working in concert with histone methyltransferase, set-6. Involved in modulation of the mitochondrial unfolded protein response (UPR). Negatively regulates expression of bas-1, a serotonin (5-HT) and dopamine synthesizing enzyme (DOPA decarboxylase), with aging. Negatively modulates levels of endogenous 5-HT and dopamine with aging. Involved in modulating longevity, probably as a result of enhanced stress resistance via mechanisms related to dietary restriction and mitochondrial function. This is Bromodomain adjacent to zinc finger domain protein 2 from Caenorhabditis elegans.